Reading from the N-terminus, the 554-residue chain is MLLRSPSYAGKAAQAQEGDAYGVYQLATLLIGMDAEDETSCLLAADALYRLGRLDDAHKSLLVALSQRPQAAPVLVRLALLQLRRGFCYDANQLVKKVAQSGDTACLQHMLDIFHHEDLQLLQDHCHTRALSILRARPGGSDSEAHTREAIAYLSLAIFAAGSGGSESLLVRARCYGLLGQKKTAMFDFNAILREEPGNVKALCGRALVHLALDQLQEAVDDMVSALKLDPGTVIPEILSLKTEVQLPLTQGLYTRCRVLLNQCLHTGVPLREEDTQGLLAMGKALIRINATQPSWRLLLTDILTGLGKYQEAGTHLQEALHLTPSSEAAQARQGLLQLKKGDVSAAVHGLQCLAERDTQDLGFLLCLLDSPERQSLVQTAAKEASNILDLGNPGQALSYCSLAILAGGNNPYHLRLRVACLTQLQEYDRALRDLDRVLQHPAEDSDLPRQSEDFCTRGRLLLSLGDKDGAAGAFTQALALAPAQAQNSLLEQPGQAMTASVFLIHGQRCLEEEHFEEAWTAVQNGLLVDPSHSGLKKLKLRTRKVATSGCRLH.

TPR repeat units lie at residues 38–71, 166–199, 200–233, 294–327, 328–361, 411–445, 452–485, and 500–533; these read ETSCLLAADALYRLGRLDDAHKSLLVALSQRPQA, SESLLVRARCYGLLGQKKTAMFDFNAILREEPGN, VKALCGRALVHLALDQLQEAVDDMVSALKLDPGT, PSWRLLLTDILTGLGKYQEAGTHLQEALHLTPSS, EAAQARQGLLQLKKGDVSAAVHGLQCLAERDTQD, NPYHLRLRVACLTQLQEYDRALRDLDRVLQHPAED, SEDFCTRGRLLLSLGDKDGAAGAFTQALALAPAQ, and ASVFLIHGQRCLEEEHFEEAWTAVQNGLLVDPSH.

The protein is Tetratricopeptide repeat protein 34 (Ttc34) of Mus musculus (Mouse).